The chain runs to 438 residues: Tol-Pal system protein TolB (438 aa).

An N-terminal signal peptide occupies residues 1 to 21; the sequence is MVKRSLLVLALLICLPATLFA.

The protein belongs to the TolB family. The Tol-Pal system is composed of five core proteins: the inner membrane proteins TolA, TolQ and TolR, the periplasmic protein TolB and the outer membrane protein Pal. They form a network linking the inner and outer membranes and the peptidoglycan layer.

It is found in the periplasm. In terms of biological role, part of the Tol-Pal system, which plays a role in outer membrane invagination during cell division and is important for maintaining outer membrane integrity. The protein is Tol-Pal system protein TolB of Desulfosudis oleivorans (strain DSM 6200 / JCM 39069 / Hxd3) (Desulfococcus oleovorans).